Here is a 58-residue protein sequence, read N- to C-terminus: Small ribosomal subunit protein bS21 (58 aa).

A disordered region spans residues 35–58 (REHYEKPSVKKKKKSEAARKRKFK). A compositionally biased stretch (basic residues) spans 43 to 58 (VKKKKKSEAARKRKFK).

It belongs to the bacterial ribosomal protein bS21 family.

The protein is Small ribosomal subunit protein bS21 of Clostridium botulinum (strain Alaska E43 / Type E3).